The chain runs to 580 residues: MSKLKTLNRQFISNLETHKVTTDAKRNLILSILKSTTTKREAKNYLTKYQNQFDFNDDLDFNKSIKIKNEQSSLTNRDSQRELFINRFLNQSNPFINVYDKEDVKLQKVPLRLAIFKIKFTKITIKQWKGIAETFKRLITLGISPIIMLDYDHLPSDSYKNNELYMINQGNKMLNYLGHPEEESDLKVTLLRSLFTSHKGVPTLDSLESILIPLYQGIIPIIQPIVYNADLSKQEFLASDKLLLGLSSALIEKRTTDLLSIEKIVMIDPIGGIPSIERHQTSHVFINLSQEYSDILSELFIGHIEPKYRDTHVDNLNTMNNVLSYINEKSGNDETTGIITTPEIMSINIDQLNPIIYNVLTDRAIISSSLPSTTNRTPHLSTTIIKKGVEVQIFDVDNYDKDLTMQNLFDDKLVNKEKLIDLLNDSFGKSLDVGPYLDRINKNIATVVIVGDYDGAAIITWEYSKGEKIAYLDKFAIAKKNQGLPGLADVIFKIILQSHPFELIWRSRKNNPVNKWYFERCCGCMSAPDSQWKIFYTGEVFDKKIDRFKRKLRHQNGVVDIDRKLQQYSEICEGITPSFK.

The 158-residue stretch at 403-560 folds into the N-acetyltransferase domain; that stretch reads LTMQNLFDDK…KLRHQNGVVD (158 aa).

Belongs to the acetyltransferase family.

The protein resides in the mitochondrion. It catalyses the reaction L-glutamate + acetyl-CoA = N-acetyl-L-glutamate + CoA + H(+). Its pathway is amino-acid biosynthesis; L-arginine biosynthesis; N(2)-acetyl-L-ornithine from L-glutamate: step 1/4. Its function is as follows. N-acetylglutamate synthase involved in arginine biosynthesis. In Candida albicans (strain SC5314 / ATCC MYA-2876) (Yeast), this protein is Amino-acid acetyltransferase, mitochondrial (ARG2).